The following is a 354-amino-acid chain: UDP-N-acetylglucosamine--N-acetylmuramyl-(pentapeptide) pyrophosphoryl-undecaprenol N-acetylglucosamine transferase (354 aa).

Residues 13–15 (SGG), asparagine 125, arginine 161, serine 189, isoleucine 242, 261–266 (ALTVSE), and glutamine 286 contribute to the UDP-N-acetyl-alpha-D-glucosamine site.

Belongs to the glycosyltransferase 28 family. MurG subfamily.

The protein localises to the cell inner membrane. The catalysed reaction is di-trans,octa-cis-undecaprenyl diphospho-N-acetyl-alpha-D-muramoyl-L-alanyl-D-glutamyl-meso-2,6-diaminopimeloyl-D-alanyl-D-alanine + UDP-N-acetyl-alpha-D-glucosamine = di-trans,octa-cis-undecaprenyl diphospho-[N-acetyl-alpha-D-glucosaminyl-(1-&gt;4)]-N-acetyl-alpha-D-muramoyl-L-alanyl-D-glutamyl-meso-2,6-diaminopimeloyl-D-alanyl-D-alanine + UDP + H(+). It functions in the pathway cell wall biogenesis; peptidoglycan biosynthesis. Cell wall formation. Catalyzes the transfer of a GlcNAc subunit on undecaprenyl-pyrophosphoryl-MurNAc-pentapeptide (lipid intermediate I) to form undecaprenyl-pyrophosphoryl-MurNAc-(pentapeptide)GlcNAc (lipid intermediate II). The sequence is that of UDP-N-acetylglucosamine--N-acetylmuramyl-(pentapeptide) pyrophosphoryl-undecaprenol N-acetylglucosamine transferase from Buchnera aphidicola subsp. Schizaphis graminum (strain Sg).